The following is a 266-amino-acid chain: Large ribosomal subunit protein uL3 (266 aa).

A disordered region spans residues 124–149; it reads NQKIGPKSHGGGGGSKPVRQTGSLGD.

The protein belongs to the universal ribosomal protein uL3 family. Part of the 50S ribosomal subunit. Forms a cluster with proteins L14 and L19.

Functionally, one of the primary rRNA binding proteins, it binds directly near the 3'-end of the 23S rRNA, where it nucleates assembly of the 50S subunit. The sequence is that of Large ribosomal subunit protein uL3 from Mycoplasmopsis pulmonis (strain UAB CTIP) (Mycoplasma pulmonis).